The sequence spans 384 residues: Actin-related protein 2/3 complex subunit 1 (384 aa).

WD repeat units lie at residues 61 to 99, 105 to 146, 151 to 190, 212 to 251, and 349 to 383; these read DHDK…TYKP, RINR…WVSK, PIKS…LDSK, YQGS…QSVN, and AHEN…VIYT.

It belongs to the WD repeat ARPC1 family. Component of the Arp2/3 complex composed of ARP2, ARP3, ARC40/p41-ARC, ARC35/p34-ARC, ARC18/p21-ARC, ARC19/p20-ARC and ARC16/p16-ARC.

The protein localises to the cytoplasm. It localises to the cytoskeleton. Its subcellular location is the actin patch. In terms of biological role, functions as a component of the Arp2/3 complex which is involved in regulation of actin polymerization and together with an activating nucleation-promoting factor (NPF) mediates the formation of branched actin networks. This is Actin-related protein 2/3 complex subunit 1 (ARC40) from Saccharomyces cerevisiae (strain ATCC 204508 / S288c) (Baker's yeast).